The chain runs to 491 residues: Pyruvate carboxylase subunit A (491 aa).

Positions 1-445 (MFSKILVANR…HTHFVDEYRR (445 aa)) constitute a Biotin carboxylation domain. ATP is bound by residues Lys116, Glu200, and His235. The 197-residue stretch at 120 to 316 (KKLMKKAGVP…LVKEQIRVAS (197 aa)) folds into the ATP-grasp domain. Residue Arg291 is part of the active site.

In terms of assembly, heterooctamer of four A and four B subunits. Mg(2+) serves as cofactor. Requires Mn(2+) as cofactor. It depends on Co(2+) as a cofactor.

It carries out the reaction hydrogencarbonate + pyruvate + ATP = oxaloacetate + ADP + phosphate + H(+). It functions in the pathway carbohydrate biosynthesis; gluconeogenesis. With respect to regulation, inhibited by ADP and alpha-ketoglutarate. Its function is as follows. Pyruvate carboxylase catalyzes a 2-step reaction, involving the ATP-dependent carboxylation of the covalently attached biotin in the first step and the transfer of the carboxyl group to pyruvate in the second. This Methanothermobacter thermautotrophicus (strain ATCC 29096 / DSM 1053 / JCM 10044 / NBRC 100330 / Delta H) (Methanobacterium thermoautotrophicum) protein is Pyruvate carboxylase subunit A (pycA).